A 209-amino-acid chain; its full sequence is Small ribosomal subunit protein uS3 (209 aa).

One can recognise a KH type-2 domain in the interval 38 to 107 (IRKFIKNRYY…RVVINIEEIK (70 aa)).

Belongs to the universal ribosomal protein uS3 family. As to quaternary structure, part of the 30S ribosomal subunit. Forms a tight complex with proteins S10 and S14.

Functionally, binds the lower part of the 30S subunit head. Binds mRNA in the 70S ribosome, positioning it for translation. The chain is Small ribosomal subunit protein uS3 from Thermotoga petrophila (strain ATCC BAA-488 / DSM 13995 / JCM 10881 / RKU-1).